A 304-amino-acid chain; its full sequence is Phosphatidylinositol mannoside acyltransferase (304 aa).

The Proton acceptor role is filled by histidine 126. Residues histidine 126 and arginine 164 each contribute to the hexadecanoyl-CoA site. Residue glutamate 200 is part of the active site. Serine 206 and glutamate 229 together coordinate hexadecanoyl-CoA.

It belongs to the LpxL/LpxM/LpxP family. In terms of assembly, monomer.

It localises to the cell inner membrane. It catalyses the reaction a 2,6-O-bis(alpha-D-mannopyranosyl)-1-phosphatidyl-1D-myo-inositol + an acyl-CoA = a 2-O-(alpha-D-mannosyl)-6-O-(6-O-acyl-alpha-D-mannosyl)-1-phosphatidyl-1D-myo-inositol + CoA. The enzyme catalyses a 1,2-diacyl-sn-glycero-3-phospho-[alpha-D-mannopyranosyl-(1&lt;-&gt;6)-D-myo-inositol] + an acyl-CoA = a 1,2-diacyl-sn-glycero-3-phospho-[alpha-D-6-acyl-mannopyranosyl-(1&lt;-&gt;6)-D-myo-inositol] + CoA. The protein operates within phospholipid metabolism; phosphatidylinositol metabolism. Catalyzes the transfer of a palmitoyl moiety from palmitoyl-CoA to the 6-position of the mannose ring linked to the 2-position of myo-inositol in phosphatidyl-myo-inositol monomannoside (PIM1) or dimannoside (PIM2). The sequence is that of Phosphatidylinositol mannoside acyltransferase from Mycolicibacterium smegmatis (strain ATCC 700084 / mc(2)155) (Mycobacterium smegmatis).